A 2182-amino-acid polypeptide reads, in one-letter code: Autophagy-related protein 2 (2182 aa).

Disordered stretches follow at residues 291-375 (SPSL…PLAD), 392-426 (EQDY…ATPR), 523-630 (YTHE…STTL), 663-682 (DIDP…VATP), 736-758 (GAFS…SSVE), and 793-816 (DKKP…SKET). Composition is skewed to polar residues over residues 303-313 (NPPSRQATELS) and 322-331 (VSSSQASIRS). The span at 332 to 347 (NEPESASHHSLPENDH) shows a compositional bias: basic and acidic residues. Acidic residues-rich tracts occupy residues 528–540 (AENE…EQTT) and 613–624 (WDDDYDDPEEEP). Positions 745–758 (HAQQRSSQGTSSVE) are enriched in polar residues. Positions 793–813 (DKKPSPAEGSKQDTASKDAPS) are enriched in basic and acidic residues.

Belongs to the ATG2 family. As to quaternary structure, interacts with ATG18.

The protein resides in the preautophagosomal structure membrane. It localises to the endoplasmic reticulum membrane. It catalyses the reaction a 1,2-diacyl-sn-glycero-3-phosphocholine(in) = a 1,2-diacyl-sn-glycero-3-phosphocholine(out). It carries out the reaction a 1,2-diacyl-sn-glycero-3-phospho-L-serine(in) = a 1,2-diacyl-sn-glycero-3-phospho-L-serine(out). The catalysed reaction is a 1,2-diacyl-sn-glycero-3-phosphoethanolamine(in) = a 1,2-diacyl-sn-glycero-3-phosphoethanolamine(out). In terms of biological role, lipid transfer protein required for autophagosome completion and peroxisome degradation and peroxisome degradation. Tethers the edge of the isolation membrane (IM) to the endoplasmic reticulum (ER) and mediates direct lipid transfer from ER to IM for IM expansion. ATG2 binds to the ER exit site (ERES), which is the membrane source for autophagosome formation, using basic residues in its N-terminal region (NR) and to the expanding edge of the IM through its C-terminal region. The latter binding is assisted by an ATG18-PtdIns3P interaction. ATG2 then extracts phospholipids from the membrane source using its NR and transfers them to ATG9 to the IM through its predicted beta-sheet-rich structure for membrane expansion. Autophagy is required for proper vegetative growth, asexual/sexual reproduction, and full virulence. Autophagy is particularly involved in the biosynthesis of deoxynivalenol (DON), an important virulence determinant. In Gibberella zeae (strain ATCC MYA-4620 / CBS 123657 / FGSC 9075 / NRRL 31084 / PH-1) (Wheat head blight fungus), this protein is Autophagy-related protein 2.